A 337-amino-acid polypeptide reads, in one-letter code: Nicotinate-nucleotide--dimethylbenzimidazole phosphoribosyltransferase (337 aa).

Glutamate 305 serves as the catalytic Proton acceptor.

This sequence belongs to the CobT family.

It catalyses the reaction 5,6-dimethylbenzimidazole + nicotinate beta-D-ribonucleotide = alpha-ribazole 5'-phosphate + nicotinate + H(+). It functions in the pathway nucleoside biosynthesis; alpha-ribazole biosynthesis; alpha-ribazole from 5,6-dimethylbenzimidazole: step 1/2. Functionally, catalyzes the synthesis of alpha-ribazole-5'-phosphate from nicotinate mononucleotide (NAMN) and 5,6-dimethylbenzimidazole (DMB). In Roseobacter denitrificans (strain ATCC 33942 / OCh 114) (Erythrobacter sp. (strain OCh 114)), this protein is Nicotinate-nucleotide--dimethylbenzimidazole phosphoribosyltransferase.